The following is a 195-amino-acid chain: Large ribosomal subunit protein uL11m (195 aa).

The protein belongs to the universal ribosomal protein uL11 family. Component of the mitochondrial ribosome large subunit (39S) which comprises a 16S rRNA and about 50 distinct proteins.

Its subcellular location is the mitochondrion. This is Large ribosomal subunit protein uL11m (mrpl-11) from Caenorhabditis elegans.